The primary structure comprises 49 residues: Cytochrome b559 subunit beta (49 aa).

The helical transmembrane segment at 24-40 (WLAVHVLGVPTVFFLGA) threads the bilayer. H28 is a heme binding site.

Belongs to the PsbE/PsbF family. As to quaternary structure, heterodimer of an alpha subunit and a beta subunit. PSII is composed of 1 copy each of membrane proteins PsbA, PsbB, PsbC, PsbD, PsbE, PsbF, PsbH, PsbI, PsbJ, PsbK, PsbL, PsbM, PsbT, PsbX, PsbY, Psb30/Ycf12, peripheral proteins PsbO, CyanoQ (PsbQ), PsbU, PsbV and a large number of cofactors. It forms dimeric complexes. Heme b serves as cofactor.

Its subcellular location is the cellular thylakoid membrane. Its function is as follows. This b-type cytochrome is tightly associated with the reaction center of photosystem II (PSII). PSII is a light-driven water:plastoquinone oxidoreductase that uses light energy to abstract electrons from H(2)O, generating O(2) and a proton gradient subsequently used for ATP formation. It consists of a core antenna complex that captures photons, and an electron transfer chain that converts photonic excitation into a charge separation. This is Cytochrome b559 subunit beta from Prochlorococcus marinus (strain MIT 9303).